A 236-amino-acid polypeptide reads, in one-letter code: 2,3,4,5-tetrahydropyridine-2,6-dicarboxylate N-acetyltransferase (236 aa).

This sequence belongs to the transferase hexapeptide repeat family. DapH subfamily.

It carries out the reaction (S)-2,3,4,5-tetrahydrodipicolinate + acetyl-CoA + H2O = L-2-acetamido-6-oxoheptanedioate + CoA. The protein operates within amino-acid biosynthesis; L-lysine biosynthesis via DAP pathway; LL-2,6-diaminopimelate from (S)-tetrahydrodipicolinate (acetylase route): step 1/3. In terms of biological role, catalyzes the transfer of an acetyl group from acetyl-CoA to tetrahydrodipicolinate. The protein is 2,3,4,5-tetrahydropyridine-2,6-dicarboxylate N-acetyltransferase of Pediococcus pentosaceus (strain ATCC 25745 / CCUG 21536 / LMG 10740 / 183-1w).